The chain runs to 118 residues: Beta-2-microglobulin (118 aa).

The N-terminal stretch at 1 to 21 is a signal peptide; that stretch reads MESRWGIVVIGLLCCVSWVEA. An Ig-like C1-type domain is found at 26–113; sequence PKIQVYTRSP…THNSVTKSVK (88 aa). C46 and C101 are disulfide-bonded.

The protein belongs to the beta-2-microglobulin family. Heterodimer of an alpha chain and a beta chain. Beta-2-microglobulin is the beta-chain of major histocompatibility complex class I molecules.

It localises to the secreted. Its function is as follows. Component of the class I major histocompatibility complex (MHC). Involved in the presentation of peptide antigens to the immune system. The sequence is that of Beta-2-microglobulin (B2M) from Tachyglossus aculeatus aculeatus (Southeast Australian short-beaked echidna).